The following is a 379-amino-acid chain: RIB43A-like with coiled-coils protein 1 (379 aa).

The tract at residues 1 to 21 (MYNIKQSTDTKEAAAIEARRN) is disordered. A compositionally biased stretch (basic and acidic residues) spans 8–21 (TDTKEAAAIEARRN). Coiled coils occupy residues 82–111 (KEEA…GREF) and 216–304 (NANK…QAEK).

The protein belongs to the RIB43A family. Microtubule inner protein component of sperm flagellar doublet microtubules.

Its subcellular location is the cytoplasm. It is found in the cytoskeleton. It localises to the flagellum axoneme. This is RIB43A-like with coiled-coils protein 1 (RIBC1) from Homo sapiens (Human).